Consider the following 1358-residue polypeptide: Probable serine/threonine-protein kinase ifkB (1358 aa).

The region spanning Met-1–Leu-582 is the Protein kinase domain. Residues Ile-2–Val-10 and Lys-25 contribute to the ATP site. The tract at residues Gly-125 to Glu-359 is disordered. Residues Val-136 to Gly-148 show a composition bias toward polar residues. Over residues Asn-149 to Asn-196 the composition is skewed to low complexity. The segment covering Lys-197–Lys-208 has biased composition (basic residues). Positions Asn-258–Gly-285 are enriched in low complexity. Residues Asp-306–Asp-333 are compositionally biased toward acidic residues. Low complexity predominate over residues Ser-342 to Ser-351. Asp-413 functions as the Proton acceptor in the catalytic mechanism. Disordered regions lie at residues Asp-445–Gln-470 and Gly-1148–Ser-1204. The span at Leu-447–Ser-466 shows a compositional bias: low complexity. A compositionally biased stretch (gly residues) spans Gly-1148–Asn-1172. Positions Ser-1185 to Asn-1199 are enriched in low complexity.

This sequence belongs to the protein kinase superfamily. Ser/Thr protein kinase family. GCN2 subfamily.

It carries out the reaction L-seryl-[protein] + ATP = O-phospho-L-seryl-[protein] + ADP + H(+). The enzyme catalyses L-threonyl-[protein] + ATP = O-phospho-L-threonyl-[protein] + ADP + H(+). In Dictyostelium discoideum (Social amoeba), this protein is Probable serine/threonine-protein kinase ifkB (ifkB).